A 529-amino-acid chain; its full sequence is Aldehyde dehydrogenase 1 (529 aa).

251–256 (GSTYVG) is a binding site for NAD(+). Catalysis depends on residues Glu273 and Cys307.

Belongs to the aldehyde dehydrogenase family.

The enzyme catalyses an aldehyde + NAD(+) + H2O = a carboxylate + NADH + 2 H(+). The chain is Aldehyde dehydrogenase 1 from Entamoeba histolytica (strain ATCC 30459 / HM-1:IMSS / ABRM).